Reading from the N-terminus, the 185-residue chain is HTH-type transcriptional regulator Hpr (185 aa).

The HTH marR-type domain occupies 13–157; it reads AMIFSQRIAQ…LIAILRNIYG (145 aa). A DNA-binding region (H-T-H motif) is located at residues 63-86; it reads ISEIAKFGVMHVSTAFNFSKKLEE.

In terms of assembly, homodimer.

Negative regulator of protease production and sporulation. The protein is HTH-type transcriptional regulator Hpr of Bacillus mycoides (strain KBAB4) (Bacillus weihenstephanensis).